We begin with the raw amino-acid sequence, 112 residues long: Tetracenomycin-F1 monooxygenase (112 aa).

The 90-residue stretch at 11–100 (FTLVNVFGVA…SRPKPIFCEV (90 aa)) folds into the ABM domain.

In terms of assembly, homotrimer.

The catalysed reaction is tetracenomycin F1 + O2 = tetracenomycin D3 + H2O + H(+). It functions in the pathway antibiotic biosynthesis; tetracenomycin C biosynthesis. Inhibited by p-chloromercuribenzoic acid, N-ethylmaleimide and diethyl pyrocarbonate. Functionally, oxygenase required for conversion of tetracenomycin F1 to tetracenomycin D3. The chain is Tetracenomycin-F1 monooxygenase (tcmH) from Streptomyces glaucescens.